Consider the following 307-residue polypeptide: tRNA dimethylallyltransferase 1 (307 aa).

Residue 11-18 participates in ATP binding; it reads GPTASGKT. Position 13-18 (13-18) interacts with substrate; the sequence is TASGKT. 2 interaction with substrate tRNA regions span residues 36–39 and 159–163; these read DSRQ and QRAIR.

Belongs to the IPP transferase family. Monomer. Mg(2+) serves as cofactor.

The catalysed reaction is adenosine(37) in tRNA + dimethylallyl diphosphate = N(6)-dimethylallyladenosine(37) in tRNA + diphosphate. In terms of biological role, catalyzes the transfer of a dimethylallyl group onto the adenine at position 37 in tRNAs that read codons beginning with uridine, leading to the formation of N6-(dimethylallyl)adenosine (i(6)A). The chain is tRNA dimethylallyltransferase 1 from Parabacteroides distasonis (strain ATCC 8503 / DSM 20701 / CIP 104284 / JCM 5825 / NCTC 11152).